A 140-amino-acid polypeptide reads, in one-letter code: Gastrula zinc finger protein XlCGF49.1 (140 aa).

5 C2H2-type zinc fingers span residues 6-28, 34-56, 62-84, 90-112, and 118-140; these read FTCM…YKIH, FTCM…YKMH, FSCS…QKIH, YACT…WKIH, and FSCT…QKMH.

It belongs to the krueppel C2H2-type zinc-finger protein family.

Its subcellular location is the nucleus. In terms of biological role, may be involved in transcriptional regulation. The chain is Gastrula zinc finger protein XlCGF49.1 from Xenopus laevis (African clawed frog).